The following is a 143-amino-acid chain: Nucleoside diphosphate kinase (143 aa).

Residues K10, F58, R86, T92, R103, and N113 each contribute to the ATP site. H116 functions as the Pros-phosphohistidine intermediate in the catalytic mechanism.

This sequence belongs to the NDK family. Homotetramer. It depends on Mg(2+) as a cofactor.

It is found in the cytoplasm. The enzyme catalyses a 2'-deoxyribonucleoside 5'-diphosphate + ATP = a 2'-deoxyribonucleoside 5'-triphosphate + ADP. It catalyses the reaction a ribonucleoside 5'-diphosphate + ATP = a ribonucleoside 5'-triphosphate + ADP. Functionally, major role in the synthesis of nucleoside triphosphates other than ATP. The ATP gamma phosphate is transferred to the NDP beta phosphate via a ping-pong mechanism, using a phosphorylated active-site intermediate. The protein is Nucleoside diphosphate kinase of Ehrlichia ruminantium (strain Welgevonden).